The sequence spans 117 residues: Immunoglobulin lambda variable 1-44 (117 aa).

An N-terminal signal peptide occupies residues 1–19 (MASFPLLLTLLTHCAGSWA). At Gln20 the chain carries Pyrrolidone carboxylic acid. The framework-1 stretch occupies residues 20–44 (QSVLTQPPSASGTPGQRVTISCSGS). In terms of domain architecture, Ig-like spans 20 to 117 (QSVLTQPPSA…CAAWDDSLNG (98 aa)). Residues 24–35 (TQPPSASGTPGQ) are compositionally biased toward polar residues. The disordered stretch occupies residues 24 to 45 (TQPPSASGTPGQRVTISCSGSS). A disulfide bond links Cys41 and Cys108. The complementarity-determining-1 stretch occupies residues 45–52 (SSNIGSNT). The framework-2 stretch occupies residues 53 to 69 (VNWYQQLPGTAPKLLIY). The interval 70 to 72 (SNN) is complementarity-determining-2. The framework-3 stretch occupies residues 73 to 108 (QRPSGVPDRFSGSKSGTSASLAISGLQSEDEADYYC). Positions 109–117 (AAWDDSLNG) are complementarity-determining-3.

Immunoglobulins are composed of two identical heavy chains and two identical light chains; disulfide-linked.

It localises to the secreted. It is found in the cell membrane. Functionally, v region of the variable domain of immunoglobulin light chains that participates in the antigen recognition. Immunoglobulins, also known as antibodies, are membrane-bound or secreted glycoproteins produced by B lymphocytes. In the recognition phase of humoral immunity, the membrane-bound immunoglobulins serve as receptors which, upon binding of a specific antigen, trigger the clonal expansion and differentiation of B lymphocytes into immunoglobulins-secreting plasma cells. Secreted immunoglobulins mediate the effector phase of humoral immunity, which results in the elimination of bound antigens. The antigen binding site is formed by the variable domain of one heavy chain, together with that of its associated light chain. Thus, each immunoglobulin has two antigen binding sites with remarkable affinity for a particular antigen. The variable domains are assembled by a process called V-(D)-J rearrangement and can then be subjected to somatic hypermutations which, after exposure to antigen and selection, allow affinity maturation for a particular antigen. This is Immunoglobulin lambda variable 1-44 from Homo sapiens (Human).